A 984-amino-acid polypeptide reads, in one-letter code: MALDCLLLFLLASAVAAMEETLMDTRTATAELGWTANPASGWEEVSGYDENLNTIRTYQVCNVFEPNQNNWLLTTFINRRGAHRIYTEMRFTVRDCSSLPNVPGSCKETFNLYYYETDSVIATKKSAFWSEAPYLKVDTIAADESFSQVDFGGRLMKVNTEVRSFGPLTRNGFYLAFQDYGACMSLLSVRVFFKKCPSIVQNFAVFPETMTGAESTSLVIARGTCIPNAEEVDVPIKLYCNGDGEWMVPIGRCTCKPGYEPENSVACKACPAGTFKASQEAEGCSHCPSNSRSPSEASPICTCRTGYYRADFDPPEVACTSVPSGPRNVISIVNETSIILEWHPPRETGGRDDVTYNIICKKCRADRRSCSRCDDNVEFVPRQLGLTECRVSISSLWAHTPYTFDIQAINGVSSKSPFPPQHVSVNITTNQAAPSTVPIMHQVSATMRSITLSWPQPEQPNGIILDYEIRYYEKEHNEFNSSMARSQTNTARIDGLRPGMVYVVQVRARTVAGYGKFSGKMCFQTLTDDDYKSELREQLPLIAGSAAAGVVFVVSLVAISIVCSRKRAYSKEAAYSDKLQHYSTGRGSPGMKIYIDPFTYEDPNEAVREFAKEIDVSFVKIEEVIGAGEFGEVYKGRLKLPGKREIYVAIKTLKAGYSEKQRRDFLSEASIMGQFDHPNIIRLEGVVTKSRPVMIITEFMENGALDSFLRQNDGQFTVIQLVGMLRGIAAGMKYLSEMNYVHRDLAARNILVNSNLVCKVSDFGLSRYLQDDTSDPTYTSSLGGKIPVRWTAPEAIAYRKFTSASDVWSYGIVMWEVMSFGERPYWDMSNQDVINAIEQDYRLPPPMDCPAALHQLMLDCWQKDRNSRPRFAEIVNTLDKMIRNPASLKTVATITAVPSQPLLDRSIPDFTAFTTVDDWLSAIKMVQYRDSFLTAGFTSLQLVTQMTSEDLLRIGVTLAGHQKKILSSIHSMRVQMNQSPSVMA.

A signal peptide spans 1–17 (MALDCLLLFLLASAVAA). Topologically, residues 18–540 (MEETLMDTRT…YKSELREQLP (523 aa)) are extracellular. The Eph LBD domain maps to 19-201 (EETLMDTRTA…FFKKCPSIVQ (183 aa)). 2 consecutive Fibronectin type-III domains span residues 322 to 432 (VPSG…TNQA) and 433 to 528 (APST…TLTD). N-linked (GlcNAc...) asparagine glycans are attached at residues Asn-334, Asn-426, and Asn-480. The chain crosses the membrane as a helical span at residues 541–563 (LIAGSAAAGVVFVVSLVAISIVC). Residues 564-984 (SRKRAYSKEA…QMNQSPSVMA (421 aa)) are Cytoplasmic-facing. Position 600 is a phosphotyrosine (Tyr-600). Residues 619-882 (VKIEEVIGAG…EIVNTLDKMI (264 aa)) enclose the Protein kinase domain. Residues 625–633 (IGAGEFGEV) and Lys-651 contribute to the ATP site. The active-site Proton acceptor is Asp-744. The SAM domain occupies 911 to 975 (TAFTTVDDWL…LSSIHSMRVQ (65 aa)). Phosphotyrosine; by autocatalysis is present on Tyr-928. A PDZ-binding motif is present at residues 982 to 984 (VMA).

This sequence belongs to the protein kinase superfamily. Tyr protein kinase family. Ephrin receptor subfamily. In terms of assembly, heterotetramer upon binding of the ligand. The heterotetramer is composed of an ephrin dimer and a receptor dimer. Oligomerization is probably required to induce biological responses. Interacts with EPHB6; transphosphorylates EPHB6 to form an active signaling complex. Interacts with PICK1. Interacts (through Tyr-594) with NCK1 (via SH2 domain); activates the JUN cascade to regulate cell adhesion. The ligand-activated form interacts (through Tyr-928) with GRB7 and GRB10 (via SH2 domains). The ligand-activated form interacts (residues within the catalytic domain) with GRB2 (via SH2 domain). Interacts with GRB2, SHC1 and SRC; activates the MAPK/ERK cascade to regulate cell migration. Interacts with CBL; regulates receptor degradation through ubiquitination. Interacts with ACP1. Phosphorylated. Autophosphorylation is stimulated by the ligand EFNB1. Required for interaction with SH2 domain-containing interactors, for activation of the MAPK/ERK and JUN signaling cascades and for ubiquitination by CBL. In terms of processing, ubiquitinated; (EFNB1)ligand-induced poly- and/or multi-ubiquitination by CBL is regulated by SRC and leads to lysosomal degradation. As to expression, expressed in neural stem and progenitor cells in the dentate gyrus. Expressed in myogenic progenitor cells.

It is found in the cell membrane. The protein resides in the early endosome membrane. The protein localises to the cell projection. It localises to the dendrite. It carries out the reaction L-tyrosyl-[protein] + ATP = O-phospho-L-tyrosyl-[protein] + ADP + H(+). In terms of biological role, receptor tyrosine kinase which binds promiscuously transmembrane ephrin-B family ligands residing on adjacent cells, leading to contact-dependent bidirectional signaling into neighboring cells. The signaling pathway downstream of the receptor is referred to as forward signaling while the signaling pathway downstream of the ephrin ligand is referred to as reverse signaling. Cognate/functional ephrin ligands for this receptor include EFNB1, EFNB2 and EFNB3. During nervous system development, regulates retinal axon guidance redirecting ipsilaterally ventrotemporal retinal ganglion cells axons at the optic chiasm midline. This probably requires repulsive interaction with EFNB2. In the adult nervous system together with EFNB3, regulates chemotaxis, proliferation and polarity of the hippocampus neural progenitors. In addition to its role in axon guidance also plays an important redundant role with other ephrin-B receptors in development and maturation of dendritic spines and synapse formation. May also regulate angiogenesis. More generally, may play a role in targeted cell migration and adhesion. Upon activation by EFNB1 and probably other ephrin-B ligands activates the MAPK/ERK and the JNK signaling cascades to regulate cell migration and adhesion respectively. Involved in the maintenance of the pool of satellite cells (muscle stem cells) by promoting their self-renewal and reducing their activation and differentiation. This chain is Ephrin type-B receptor 1 (Ephb1), found in Mus musculus (Mouse).